The primary structure comprises 477 residues: Ribulose bisphosphate carboxylase large chain (477 aa).

The propeptide occupies 1-2 (MS). Residue Pro3 is modified to N-acetylproline. Substrate-binding residues include Asn123 and Thr173. The active-site Proton acceptor is Lys175. Lys177 lines the substrate pocket. Residues Lys201, Asp203, and Glu204 each contribute to the Mg(2+) site. Lys201 carries the N6-carboxylysine modification. The Proton acceptor role is filled by His294. Positions 295, 327, and 379 each coordinate substrate.

It belongs to the RuBisCO large chain family. Type I subfamily. In terms of assembly, heterohexadecamer of 8 large chains and 8 small chains; disulfide-linked. The disulfide link is formed within the large subunit homodimers. The cofactor is Mg(2+). Post-translationally, the disulfide bond which can form in the large chain dimeric partners within the hexadecamer appears to be associated with oxidative stress and protein turnover.

Its subcellular location is the plastid. It is found in the chloroplast. The enzyme catalyses 2 (2R)-3-phosphoglycerate + 2 H(+) = D-ribulose 1,5-bisphosphate + CO2 + H2O. It carries out the reaction D-ribulose 1,5-bisphosphate + O2 = 2-phosphoglycolate + (2R)-3-phosphoglycerate + 2 H(+). In terms of biological role, ruBisCO catalyzes two reactions: the carboxylation of D-ribulose 1,5-bisphosphate, the primary event in carbon dioxide fixation, as well as the oxidative fragmentation of the pentose substrate in the photorespiration process. Both reactions occur simultaneously and in competition at the same active site. This chain is Ribulose bisphosphate carboxylase large chain, found in Avena sativa (Oat).